Here is a 579-residue protein sequence, read N- to C-terminus: MAQVVATRSIQGSMLSPNGGSVSTRSEKLLKPASFAVKVLGNEAKRSGRVSVRSRRVVDTTVRSARVETEVIPVSPEDVPNREEQLERLLEMQQFGDTSVGMWSKPTVRRKTKIVCTVGPSTNTREMIWKLAEAGMNVARMNMSHGDHASHKKVIDLVKEYNAQTKDNTIAIMLDTKGPEVRSGDLPQPIMLDPGQEFTFTIERGVSTPSCVSVNYDDFVNDVEAGDMLLVDGGMMSFMVKSKTKDSVKCEVVDGGELKSRRHLNVRGKSATLPSITEKDWEDIKFGVENKVDFYAVSFVKDAQVVHELKKYLQNSGADIHVIVKIESADSIPNLHSIITASDGAMVARGDLGAELPIEEVPILQEEIINLCRSMGKAVIVATNMLESMIVHPTPTRAEVSDIAIAVREGADAVMLSGETAHGKFPLKAAGVMHTVALRTEATITSGEMPPNLGQAFKNHMSEMFAYHATMMSNTLGTSTVVFTRTGFMAILLSHYRPSGTIYAFTNEKKIQQRLALYQGVCPIYMEFTDDAEETFANALATLLKQGMVKKGEEIAIVQSGTQPIWRSQSTHNIQVRKV.

A chloroplast-targeting transit peptide spans 1–63 (MAQVVATRSI…SRRVVDTTVR (63 aa)). Residues 6–24 (ATRSIQGSMLSPNGGSVST) show a composition bias toward polar residues. The interval 6-26 (ATRSIQGSMLSPNGGSVSTRS) is disordered. Substrate is bound at residue R140. The K(+) site is built by N142, S144, D175, and T176. Position 142-145 (142-145 (NMSH)) interacts with ATP. R182 lines the ATP pocket. K325 contacts substrate. Residue E327 coordinates Mg(2+). Substrate contacts are provided by G350, D351, and T383. D351 serves as a coordination point for Mg(2+).

The protein belongs to the pyruvate kinase family. As to quaternary structure, oligomer of alpha and beta subunits. Mg(2+) is required as a cofactor. K(+) serves as cofactor. Mostly expressed in seeds, and, to a lower extent, in roots, leaves (veins and trichomes), inflorescences, siliques, pollen (grains and tubes) and flowers (sepals and petals).

The protein resides in the plastid. The protein localises to the chloroplast stroma. It is found in the mitochondrion. The enzyme catalyses pyruvate + ATP = phosphoenolpyruvate + ADP + H(+). The protein operates within carbohydrate degradation; glycolysis; pyruvate from D-glyceraldehyde 3-phosphate: step 5/5. In terms of biological role, required for plastidial pyruvate kinase activity. Involved in seed oil accumulation, embryo development and seed storage compounds mobilization upon germination. The protein is Plastidial pyruvate kinase 2 (PKP2) of Arabidopsis thaliana (Mouse-ear cress).